Consider the following 418-residue polypeptide: Protease LasA (418 aa).

An N-terminal signal peptide occupies residues 1-31; the sequence is MQHKRSRALASPRSPFLFALLALAVGGTANA. The propeptide occupies 32-236; the sequence is HDDGLPAFRY…ARQLQAKAAL (205 aa). H259 and D272 together coordinate Zn(2+). C301 and C347 are disulfide-bonded. Catalysis depends on proton donor/acceptor residues H317 and H356. H358 provides a ligand contact to Zn(2+). A disulfide bridge connects residues C391 and C406.

Belongs to the peptidase M23A family. The cofactor is Zn(2+).

It localises to the secreted. Involved in proteolysis and elastolysis (degradation of the host protein elastin). Has staphylolytic activity (degrades pentaglycine cross-links in cell wall peptidoglycan), preferring Gly-Gly-|-X substrates where X is Ala or Gly. Enhances the elastolytic but not proteolytic activity of elastase (lasB) and elastolytic activity of other proteases. Degradation of elastin is likely to contribute to the pathogenicity of P.aeruginosa. The chain is Protease LasA (lasA) from Pseudomonas aeruginosa (strain UCBPP-PA14).